The primary structure comprises 110 residues: UPF0122 protein SH1678 (110 aa).

Belongs to the UPF0122 family.

Might take part in the signal recognition particle (SRP) pathway. This is inferred from the conservation of its genetic proximity to ftsY/ffh. May be a regulatory protein. In Staphylococcus haemolyticus (strain JCSC1435), this protein is UPF0122 protein SH1678.